A 357-amino-acid polypeptide reads, in one-letter code: Ion-translocating oxidoreductase complex subunit D (357 aa).

3 consecutive transmembrane segments (helical) span residues 35–55, 88–108, and 119–139; these read VWLY…TVLV, LPPW…VVLG, and LFNP…VEMT. Thr176 carries the post-translational modification FMN phosphoryl threonine. 5 helical membrane passes run 209–229, 233–253, 261–281, 295–315, and 316–336; these read APGS…VYLI, VIAW…ATVF, YADA…FFIA, AVFA…GGYP, and EATA…DHWI.

This sequence belongs to the NqrB/RnfD family. In terms of assembly, the complex is composed of six subunits: RnfA, RnfB, RnfC, RnfD, RnfE and RnfG. Requires FMN as cofactor.

It localises to the cell inner membrane. Its function is as follows. Part of a membrane-bound complex that couples electron transfer with translocation of ions across the membrane. This is Ion-translocating oxidoreductase complex subunit D from Halorhodospira halophila (strain DSM 244 / SL1) (Ectothiorhodospira halophila (strain DSM 244 / SL1)).